We begin with the raw amino-acid sequence, 811 residues long: DNA mismatch repair protein MutS (811 aa).

595 to 602 is an ATP binding site; it reads GPNMSGKS.

Belongs to the DNA mismatch repair MutS family.

This protein is involved in the repair of mismatches in DNA. It is possible that it carries out the mismatch recognition step. This protein has a weak ATPase activity. The polypeptide is DNA mismatch repair protein MutS (Pseudothermotoga lettingae (strain ATCC BAA-301 / DSM 14385 / NBRC 107922 / TMO) (Thermotoga lettingae)).